A 277-amino-acid polypeptide reads, in one-letter code: Putative hydro-lyase SCO1412 (277 aa).

The protein belongs to the D-glutamate cyclase family.

The protein is Putative hydro-lyase SCO1412 of Streptomyces coelicolor (strain ATCC BAA-471 / A3(2) / M145).